Consider the following 59-residue polypeptide: Large ribosomal subunit protein bL32 (59 aa).

Residues 1–16 are compositionally biased toward basic residues; it reads MAVPKRKTSPSKRGMR. Residues 1–20 are disordered; sequence MAVPKRKTSPSKRGMRRSHD.

This sequence belongs to the bacterial ribosomal protein bL32 family.

This chain is Large ribosomal subunit protein bL32, found in Sphingopyxis alaskensis (strain DSM 13593 / LMG 18877 / RB2256) (Sphingomonas alaskensis).